The primary structure comprises 128 residues: L-ectoine synthase (128 aa).

This sequence belongs to the ectoine synthase family.

It carries out the reaction (2S)-4-acetamido-2-aminobutanoate = L-ectoine + H2O. It functions in the pathway amine and polyamine biosynthesis; ectoine biosynthesis; L-ectoine from L-aspartate 4-semialdehyde: step 3/3. Catalyzes the circularization of gamma-N-acetyl-alpha,gamma-diaminobutyric acid (ADABA) to ectoine (1,4,5,6-tetrahydro-2-methyl-4-pyrimidine carboxylic acid), which is an excellent osmoprotectant. The sequence is that of L-ectoine synthase from Vibrio parahaemolyticus serotype O3:K6 (strain RIMD 2210633).